A 439-amino-acid polypeptide reads, in one-letter code: Trigger factor (439 aa).

Residues 175–260 (GDRVTISYRS…VERLSVKDEI (86 aa)) enclose the PPIase FKBP-type domain.

Belongs to the FKBP-type PPIase family. Tig subfamily.

The protein localises to the cytoplasm. The catalysed reaction is [protein]-peptidylproline (omega=180) = [protein]-peptidylproline (omega=0). In terms of biological role, involved in protein export. Acts as a chaperone by maintaining the newly synthesized protein in an open conformation. Functions as a peptidyl-prolyl cis-trans isomerase. The chain is Trigger factor from Anaplasma phagocytophilum (strain HZ).